A 92-amino-acid polypeptide reads, in one-letter code: Acylphosphatase (92 aa).

An Acylphosphatase-like domain is found at 5–92 (RVKVKVNGRV…GVFERFEVRF (88 aa)). Catalysis depends on residues Arg-20 and Asn-38.

The protein belongs to the acylphosphatase family.

The enzyme catalyses an acyl phosphate + H2O = a carboxylate + phosphate + H(+). This chain is Acylphosphatase (acyP), found in Syntrophotalea carbinolica (strain DSM 2380 / NBRC 103641 / GraBd1) (Pelobacter carbinolicus).